Consider the following 102-residue polypeptide: Iron-sulfur cluster assembly protein CyaY (102 aa).

Belongs to the frataxin family.

Its function is as follows. Involved in iron-sulfur (Fe-S) cluster assembly. May act as a regulator of Fe-S biogenesis. The sequence is that of Iron-sulfur cluster assembly protein CyaY from Actinobacillus succinogenes (strain ATCC 55618 / DSM 22257 / CCUG 43843 / 130Z).